A 194-amino-acid chain; its full sequence is 7-methyl-GTP pyrophosphatase (194 aa).

Asp-69 functions as the Proton acceptor in the catalytic mechanism.

The protein belongs to the Maf family. YceF subfamily. A divalent metal cation is required as a cofactor.

It localises to the cytoplasm. The catalysed reaction is N(7)-methyl-GTP + H2O = N(7)-methyl-GMP + diphosphate + H(+). In terms of biological role, nucleoside triphosphate pyrophosphatase that hydrolyzes 7-methyl-GTP (m(7)GTP). May have a dual role in cell division arrest and in preventing the incorporation of modified nucleotides into cellular nucleic acids. In Salmonella paratyphi A (strain ATCC 9150 / SARB42), this protein is 7-methyl-GTP pyrophosphatase (yceF1).